The chain runs to 213 residues: Thiamine-phosphate synthase (213 aa).

4-amino-2-methyl-5-(diphosphooxymethyl)pyrimidine is bound by residues 40–44 (QFREK) and N75. The Mg(2+) site is built by D76 and D95. S113 lines the 4-amino-2-methyl-5-(diphosphooxymethyl)pyrimidine pocket. 139-141 (TPS) contributes to the 2-[(2R,5Z)-2-carboxy-4-methylthiazol-5(2H)-ylidene]ethyl phosphate binding site. 4-amino-2-methyl-5-(diphosphooxymethyl)pyrimidine is bound at residue K142. Residues G171 and 191–192 (IS) contribute to the 2-[(2R,5Z)-2-carboxy-4-methylthiazol-5(2H)-ylidene]ethyl phosphate site.

It belongs to the thiamine-phosphate synthase family. Mg(2+) is required as a cofactor.

It catalyses the reaction 2-[(2R,5Z)-2-carboxy-4-methylthiazol-5(2H)-ylidene]ethyl phosphate + 4-amino-2-methyl-5-(diphosphooxymethyl)pyrimidine + 2 H(+) = thiamine phosphate + CO2 + diphosphate. The catalysed reaction is 2-(2-carboxy-4-methylthiazol-5-yl)ethyl phosphate + 4-amino-2-methyl-5-(diphosphooxymethyl)pyrimidine + 2 H(+) = thiamine phosphate + CO2 + diphosphate. It carries out the reaction 4-methyl-5-(2-phosphooxyethyl)-thiazole + 4-amino-2-methyl-5-(diphosphooxymethyl)pyrimidine + H(+) = thiamine phosphate + diphosphate. Its pathway is cofactor biosynthesis; thiamine diphosphate biosynthesis; thiamine phosphate from 4-amino-2-methyl-5-diphosphomethylpyrimidine and 4-methyl-5-(2-phosphoethyl)-thiazole: step 1/1. Functionally, condenses 4-methyl-5-(beta-hydroxyethyl)thiazole monophosphate (THZ-P) and 2-methyl-4-amino-5-hydroxymethyl pyrimidine pyrophosphate (HMP-PP) to form thiamine monophosphate (TMP). This Staphylococcus aureus (strain MRSA252) protein is Thiamine-phosphate synthase.